The chain runs to 389 residues: MTLAAHTTEDYEELLGRVFDDQVKAWTAEAEASERFPRQLIEHLGRTGVFTQKWGDGQQPDVAKLIALALELGRLGSAGIGVGVSLHDSAIALLRRFAKNDYLRTICEQAIRGEAVLCIGASEISGGSDLQIVGTEVRSVRDGYEVRGVKKFVSLSPIADHIMVVARNVDHDPGSRHGNVVVIAVPTSQVEAQAPYRKVGAGPLDTAAVHIDTWVPGDALIARPGTGLAAISWGLAHERLSIAGQVAGASQRVIGITLARMMKRRQFGHTLYEHQALRMRMADLQARVDMLRYALAGIAAGGRLDLRAAAAIKVTAARLGEEVLSECMHIFGGSGYLTDETPLGRWWRDMKLARVGGGTDEVLWELVAAAMRPDYDGYDELIDSPTGDD.

It belongs to the acyl-CoA dehydrogenase family. Requires FAD as cofactor.

The protein operates within siderophore biosynthesis; mycobactin biosynthesis. Functionally, catalyzes the dehydrogenation at the alpha-beta position of ACP-bound acyl chains. This results in the introduction of a double bond in the lipidic chain, which is further transferred to the epsilon-amino group of lysine residue in the mycobactin core by MbtK. The protein is Acyl-[acyl-carrier-protein] dehydrogenase MbtN (mbtN) of Mycobacterium sp. (strain MCS).